The chain runs to 685 residues: MNHLGKTEVFLNRFALRPLNPEELRPWRLEVVLDPPPGREEVYPLLAQVARRAGGVTVRMGDGLASWSPPEVLVLEGTLARMGQTYAYRLYPKGRRPLDPKDPGERSVLSALARRLLQERLRRLEGVWVEGLAVYRREHARGPGWRVLGGAVLDLWVSDSGAFLLEVDPAYRILCEMSLEAWLAQGHPLPKRVRNAYDRRTWELLRLGEEDPKELPLPGGLSLLDYHASKGRLQGREGGRVAWVADPKDPRKPIPHLTGLLVPVLTLEDLHEEEGSLALSLPWEERRRRTREIASWIGRRLGLGTPEAVRAQAYRLSIPKLMGRRAVSKPADALRVGFYRAQETALALLRLDGAQGWPEFLRRALLRAFGASGASLRLHTLHAHPSQGLAFREALRKAKEEGVQAVLVLTPPMAWEDRNRLKALLLREGLPSQILNVPLREEERHRWENALLGLLAKAGLQVVALSGAYPAELAVGFDAGGRESFRFGGAACAVGGDGGHLLWTLPEAQAGERIPQEVVWDLLEETLWAFRRKAGRLPSRVLLLRDGRVPQDEFALALEALAREGIAYDLVSVRKSGGGRVYPVQGRLADGLYVPLEDKTFLLLTVHRDFRGTPRPLKLVHEAGDTPLEALAHQIFHLTRLYPASGFAFPRLPAPLHLADRLVKEVGRLGIRHLKEVDREKLFFV.

Positions 1–99 (MNHLGKTEVF…LYPKGRRPLD (99 aa)) are N-terminal domain. The linker L1 stretch occupies residues 100–176 (PKDPGERSVL…VDPAYRILCE (77 aa)). The 97-residue stretch at 169 to 265 (PAYRILCEMS…HLTGLLVPVL (97 aa)) folds into the PAZ domain. Positions 272-337 (EEEGSLALSL…SKPADALRVG (66 aa)) are linker L2. Positions 338–463 (FYRAQETALA…LLAKAGLQVV (126 aa)) are mid domain. Residues 464–685 (ALSGAYPAEL…EVDREKLFFV (222 aa)) form a PIWI domain region. Active-site residues include D478, E512, D546, and D660. D478 contacts Mn(2+). A Piwi domain is found at 507-671 (EAQAGERIPQ…LVKEVGRLGI (165 aa)). The Mn(2+) site is built by D546, D660, and V685.

This sequence belongs to the argonaute family. Long pAgo subfamily. As to quaternary structure, coimmunoprecipitates with a number of proteins involved in DNA replication or recombination including RepA (initiates replication), AddA/B (TT_C0638 and TT_C0639), ArgR, GyrA/B, HU (TT_C0984), PriA, Rad52 (TT_C1923), RecJ, SSB, TopA and UvrB. Most proteins remain associated with TtAgo after DNase treatment and associate with catalytically inactive protein. Mn(2+) serves as cofactor.

A DNA-guided ssDNA endonuclease. Uses short ssDNA sequences as guides (gDNA, also called small interfering DNA, siDNA) to bind complementary DNA target strands, resulting in cleavage of the target DNA (tDNA). The cleavage site is 10 nucleotides (nt) downstream of the target residue base-paired with the 5'-end of the gDNA. Plays a role in completion of DNA replication, participates in decatenating replicated DNA and plasmid. In situ purifies with 5'-phosphorylated long DNA (about 1160 nt, maps to the whole chromosome and plasmid), 25-35 nt RNAs that map to the whole chromosome and 15-18 nt DNA that maps to the replication terminus region (ter) on the chromosome and plasmid. Most short DNA starts with dC. Has been shown to have guide sequence-independent dsDNase activity called 'chopping', which requires unstable DNA (high AT-content, multiple mismatches or low salt conditions), and could be used to generate gDNA. Preferentially binds tDNA with dC at its 3'-terminus. Has also been shown to have no detectable guide sequence-independent dsDNase activity. The latter study proposes TtAgo may acquire gDNA from nicked dsDNA, by binding to 5'-phosphorylated-dC nicks, then cleaving 10 nt away on the opposite strand; subsequently an exonuclease (maybe AddA-AddB helicase/nuclease) trims the ends to generate the gDNA. Functionally, involved in defense against invading mobile genetic elements. TtAgo interferes with plasmid DNA, stimulates expression of specific endogenous genes, including various CRISPR loci and at least part of the CRISPR adaptation machinery, but only when exogenous plasmid DNA is present. Upon purification from E.coli associates with gDNA 13-25 nt long with 5'-phosphorylated ends and with 10-150 nt RNA with 5'-OH. DNA corresponds to the expression plasmid rather than chromosomal DNA; 89% of gDNA starts with dC and 72% has dA in the second position. Endonucleolytically cleaves tDNA with 5'-phosphorylated gDNA but not 5'-phosphorylated gRNA; the active site is involved in processing or binding of ssDNA. Nicks or linearizes supercoiled plasmid target when it has the appropriate gDNA sequences, does not cleave linear tDNA. Positions 4 to 16 of the tDNA need to be base paired to the gDNA for efficient tDNA cleavage. Although the system can support single nucleotide insertions in either the gDNA or tDNA, in all cases cleavage activity is reduced, with a wide range of sequence- and position-specific effects. Its function is as follows. First characterized as a DNA-guided RNA endonuclease. Uses gDNA to bind complementary RNA target strands, resulting in cleavage of the target RNA. The cleavage site is 10 nucleotides (nt) downstream of the target residue base-paired with the 5'-end of the guide DNA. The polypeptide is Protein argonaute (Thermus thermophilus (strain ATCC BAA-163 / DSM 7039 / HB27)).